The chain runs to 688 residues: Complement C1s-1 subcomponent (688 aa).

The first 15 residues, 1–15, serve as a signal peptide directing secretion; the sequence is MWCLVLFSLLASFSA. Positions 16 to 130 constitute a CUB 1 domain; sequence EPTMHGEILS…TGFAAYYTAI (115 aa). Ca(2+) contacts are provided by E60, D68, D113, D131, I132, and E134. C65 and C83 form a disulfide bridge. Residues 131-172 enclose the EGF-like; calcium-binding domain; sequence DINECTDFTDVPCSHFCNNFIGGYFCSCPPEYFLHDDMRNCG. Disulfide bonds link C135/C147, C143/C156, and C158/C171. Ca(2+)-binding residues include N149, F150, and G153. N149 is subject to (3R)-3-hydroxyasparagine. N-linked (GlcNAc...) asparagine glycosylation is present at N174. C175 and C202 are disulfide-bonded. The region spanning 175–290 is the CUB 2 domain; it reads CSGDVFTALI…KGWKLRYHGD (116 aa). E226, D236, D275, G278, and Q279 together coordinate Ca(2+). A disulfide bond links C234 and C251. Sushi domains lie at 292–356 and 357–423; these read ISCA…KCQP and VYCG…RCIP. Disulfide bonds link C294/C341, C321/C354, C359/C403, C386/C421, C425/C549, C595/C618, and C627/C659. The 243-residue stretch at 438-680 folds into the Peptidase S1 domain; sequence IFGGQPAKIE…YVDWILKTMQ (243 aa). Catalysis depends on charge relay system residues H475 and D529. The active-site Charge relay system is S631. N641 carries N-linked (GlcNAc...) asparagine glycosylation.

Belongs to the peptidase S1 family. In terms of assembly, core component of the complement C1 complex, a calcium-dependent complex composed of 1 molecule of the C1Q subcomplex, 2 molecules of C1R and 2 molecules of C1S. The C1Q subcomplex is composed 18 subunits: 3 chains of C1QA, C1QB, and C1QC trimerize to form 6 collagen-like triple helices connected to six globular ligand-recognition modules. Post-translationally, cleaved and activated by C1R to generate Complement C1s subcomponent heavy and light chains. The iron and 2-oxoglutarate dependent 3-hydroxylation of aspartate and asparagine is (R) stereospecific within EGF domains. As to expression, predominantly expressed in liver.

It localises to the secreted. The protein resides in the cell surface. The enzyme catalyses Cleavage of Arg-|-Ala bond in complement component C4 to form C4a and C4b, and Lys(or Arg)-|-Lys bond in complement component C2 to form C2a and C2b: the 'classical' pathway C3 convertase.. With respect to regulation, cleaved and activated by C1R. Immunoglobulin-binding promotes autoactivation of C1R, which results in the cleavage of the Arg-Ile bond in the catalytic domain. Inhibited by C1 inhibitor (SERPING1). Its function is as follows. Component of the complement C1 complex, a multiprotein complex that initiates the classical pathway of the complement system, a cascade of proteins that leads to phagocytosis and breakdown of pathogens and signaling that strengthens the adaptive immune system. C1S is activated following association of the C1 complex with immunoglobulins (IgG or IgM) complexed with antigens to form antigen-antibody complexes on the surface of pathogens. C1S is cleaved and activated by C1R to generate C1s subcomponent heavy and light chains. C1s subcomponent light chain then cleaves and activates C2 and C4, the next components of the classical complement pathway. In terms of biological role, serine protease component of the complement C1 complex, which catalyzes cleavage and activation of C2 and C4, the next components of the classical complement pathway. Also cleaves IGFBP5 and thereby inhibits the trophic effects of IGF1. The sequence is that of Complement C1s-1 subcomponent from Mus musculus (Mouse).